The following is a 693-amino-acid chain: Probable L-type lectin-domain containing receptor kinase VI.1 (693 aa).

The N-terminal stretch at 1–22 is a signal peptide; the sequence is MGIARSINSFMFFFFLMILSNA. Asn21, Asn44, Asn71, Asn89, Asn141, Asn180, and Asn223 each carry an N-linked (GlcNAc...) asparagine glycan. The Extracellular portion of the chain corresponds to 23–311; that stretch reads SKSSVLAEAT…SNKKGYNSQV (289 aa). A legume-lectin like region spans residues 33-279; the sequence is TAKFTFIGFK…AHYVMGWSFS (247 aa). A helical transmembrane segment spans residues 312–332; the sequence is IVLIVALSIVTLVLLVLLFIF. Topologically, residues 333–693 are cytoplasmic; sequence VMYKRRIQEE…VSSSSIVSGR (361 aa). A Protein kinase domain is found at 368-642; the sequence is FKESEIIGTG…LRYLNGEENV (275 aa). Residues 374 to 382 and Lys396 each bind ATP; that span reads IGTGGFGIV. Asp495 functions as the Proton acceptor in the catalytic mechanism. Residues 670 to 693 are disordered; it reads DRASSSNTFSSFSNVSSSSIVSGR.

This sequence in the C-terminal section; belongs to the protein kinase superfamily. Ser/Thr protein kinase family. It in the N-terminal section; belongs to the leguminous lectin family.

It is found in the cell membrane. The catalysed reaction is L-seryl-[protein] + ATP = O-phospho-L-seryl-[protein] + ADP + H(+). It catalyses the reaction L-threonyl-[protein] + ATP = O-phospho-L-threonyl-[protein] + ADP + H(+). The protein is Probable L-type lectin-domain containing receptor kinase VI.1 (LECRK61) of Arabidopsis thaliana (Mouse-ear cress).